The sequence spans 347 residues: MSALTPASEVILRHSDEFIARHVLFAGDLQDALPAQFDAAGIRVHTNQYHHWQLLSNTLDENVQFGLVATPETVAACDTLVYYWPKSKQEAQFQLANLLSLLPVGCDVFVVGENRSGVRSAEEMLSGFAQLTKIDSARRCGLYHGRLDKQPEFDADAWWESYQVGDVIVKTLPGVFSRDALDSGSHLLLSTFSEPFKGSVLDVGCGAGVLACVLAQQSPKIKWTLSDVSAAAIEASRATLAANNIEAQVIASNVYSDIKGRFEMIISNPPFHDGIQTSLTAAEMLIRGATAHLHVGGKLRIVANSFLPYPALLDAAFGSHEVLAQNGRFKVYQATVGRPPRDPKKKR.

The protein belongs to the methyltransferase superfamily. RsmC family. In terms of assembly, monomer.

The protein resides in the cytoplasm. It carries out the reaction guanosine(1207) in 16S rRNA + S-adenosyl-L-methionine = N(2)-methylguanosine(1207) in 16S rRNA + S-adenosyl-L-homocysteine + H(+). Functionally, specifically methylates the guanine in position 1207 of 16S rRNA in the 30S particle. This chain is Ribosomal RNA small subunit methyltransferase C, found in Yersinia enterocolitica serotype O:8 / biotype 1B (strain NCTC 13174 / 8081).